The following is a 344-amino-acid chain: Cinnamoyl-CoA reductase 1 (344 aa).

S7 carries the phosphoserine modification. NADP(+) contacts are provided by residues 17–23 (GAGGYIA), R42, K48, 68–69 (DL), 88–90 (TAS), Y161, K165, 188–191 (PVLV), and S203. A disulfide bridge links C154 with C162. K165 (proton donor) is an active-site residue. The segment at 317-344 (QEKGHLAPPPPPPSASQESVENGIKIGS) is disordered.

Belongs to the NAD(P)-dependent epimerase/dehydratase family. Dihydroflavonol-4-reductase subfamily. As to expression, expressed in leaves, stems and flowers.

The enzyme catalyses (E)-cinnamaldehyde + NADP(+) + CoA = (E)-cinnamoyl-CoA + NADPH + H(+). It functions in the pathway aromatic compound metabolism; phenylpropanoid biosynthesis. Involved in the latter stages of lignin biosynthesis. Catalyzes one of the last steps of monolignol biosynthesis, the conversion of cinnamoyl-CoAs into their corresponding cinnamaldehydes. The chain is Cinnamoyl-CoA reductase 1 from Arabidopsis thaliana (Mouse-ear cress).